Reading from the N-terminus, the 528-residue chain is Phosphoenolpyruvate carboxykinase (ATP) (528 aa).

Substrate is bound by residues arginine 56, tyrosine 192, and lysine 198. Residues lysine 198, histidine 217, and 233-241 (GLSGTGKTT) contribute to the ATP site. Positions 198 and 217 each coordinate Mn(2+). Mn(2+) is bound at residue aspartate 254. Residues glutamate 282, arginine 319, and threonine 444 each contribute to the ATP site. A substrate-binding site is contributed by arginine 319.

Belongs to the phosphoenolpyruvate carboxykinase (ATP) family. It depends on Mn(2+) as a cofactor.

The protein localises to the cytoplasm. The enzyme catalyses oxaloacetate + ATP = phosphoenolpyruvate + ADP + CO2. It participates in carbohydrate biosynthesis; gluconeogenesis. Its function is as follows. Involved in the gluconeogenesis. Catalyzes the conversion of oxaloacetate (OAA) to phosphoenolpyruvate (PEP) through direct phosphoryl transfer between the nucleoside triphosphate and OAA. This chain is Phosphoenolpyruvate carboxykinase (ATP), found in Bacillus pumilus (strain SAFR-032).